A 453-amino-acid chain; its full sequence is Chromosomal replication initiator protein DnaA (453 aa).

A domain I, interacts with DnaA modulators region spans residues M1–Y73. Residues Y73–I110 are domain II. The segment at K111 to I327 is domain III, AAA+ region. ATP contacts are provided by G155, G157, K158, and T159. Positions S328–T453 are domain IV, binds dsDNA.

Belongs to the DnaA family. In terms of assembly, oligomerizes as a right-handed, spiral filament on DNA at oriC.

The protein localises to the cytoplasm. In terms of biological role, plays an essential role in the initiation and regulation of chromosomal replication. ATP-DnaA binds to the origin of replication (oriC) to initiate formation of the DNA replication initiation complex once per cell cycle. Binds the DnaA box (a 9 base pair repeat at the origin) and separates the double-stranded (ds)DNA. Forms a right-handed helical filament on oriC DNA; dsDNA binds to the exterior of the filament while single-stranded (ss)DNA is stabiized in the filament's interior. The ATP-DnaA-oriC complex binds and stabilizes one strand of the AT-rich DNA unwinding element (DUE), permitting loading of DNA polymerase. After initiation quickly degrades to an ADP-DnaA complex that is not apt for DNA replication. Binds acidic phospholipids. The polypeptide is Chromosomal replication initiator protein DnaA (Gloeothece citriformis (strain PCC 7424) (Cyanothece sp. (strain PCC 7424))).